The primary structure comprises 264 residues: MAEQPLIGKTILTTRAAGQSSPFAAQLRAAGAAVIEMPTLEIGPPSSWLPLDEAIAAIADFDWLILASANAVEAVQQRLAAQQKSWSDVPCAIAVVGQKTAQVLAAQGGKADYIPPEFIAESLVEHFPQPVAGQRLLFPRVETGGREQITQALQSQGAIVVEVPAYESRCPSQIPDDALIALRQAHLNLISFTSSKTVRNFCQLMASNLGVDWSARISGVAIASIGPQTSITCQELLGRVEVEAQEYTLDGLLLAIEQWARQTT.

The protein belongs to the uroporphyrinogen-III synthase family.

The enzyme catalyses hydroxymethylbilane = uroporphyrinogen III + H2O. It participates in porphyrin-containing compound metabolism; protoporphyrin-IX biosynthesis; coproporphyrinogen-III from 5-aminolevulinate: step 3/4. Catalyzes cyclization of the linear tetrapyrrole, hydroxymethylbilane, to the macrocyclic uroporphyrinogen III. This chain is Uroporphyrinogen-III synthase (hemD), found in Synechococcus elongatus (strain ATCC 33912 / PCC 7942 / FACHB-805) (Anacystis nidulans R2).